Here is a 356-residue protein sequence, read N- to C-terminus: 3-dehydroquinate synthase (356 aa).

NAD(+) contacts are provided by residues 69–74 (DGEKFK), 103–107 (GVIGD), 127–128 (TT), lysine 140, lysine 149, and 167–170 (CLKT). Zn(2+)-binding residues include glutamate 182, histidine 245, and histidine 262.

This sequence belongs to the sugar phosphate cyclases superfamily. Dehydroquinate synthase family. The cofactor is Co(2+). Zn(2+) is required as a cofactor. NAD(+) serves as cofactor.

The protein localises to the cytoplasm. The catalysed reaction is 7-phospho-2-dehydro-3-deoxy-D-arabino-heptonate = 3-dehydroquinate + phosphate. It participates in metabolic intermediate biosynthesis; chorismate biosynthesis; chorismate from D-erythrose 4-phosphate and phosphoenolpyruvate: step 2/7. Functionally, catalyzes the conversion of 3-deoxy-D-arabino-heptulosonate 7-phosphate (DAHP) to dehydroquinate (DHQ). The chain is 3-dehydroquinate synthase from Psychromonas ingrahamii (strain DSM 17664 / CCUG 51855 / 37).